A 110-amino-acid chain; its full sequence is T cell receptor alpha variable 39 (110 aa).

A signal peptide spans M1–G18. An Ig-like domain is found at E19–D110. N36 and N42 each carry an N-linked (GlcNAc...) asparagine glycan. An intrachain disulfide couples C41 to C107.

In terms of assembly, alpha-beta TR is a heterodimer composed of an alpha and beta chain; disulfide-linked. The alpha-beta TR is associated with the transmembrane signaling CD3 coreceptor proteins to form the TR-CD3 (TcR or TCR). The assembly of alpha-beta TR heterodimers with CD3 occurs in the endoplasmic reticulum where a single alpha-beta TR heterodimer associates with one CD3D-CD3E heterodimer, one CD3G-CD3E heterodimer and one CD247 homodimer forming a stable octameric structure. CD3D-CD3E and CD3G-CD3E heterodimers preferentially associate with TR alpha and TR beta chains, respectively. The association of the CD247 homodimer is the last step of TcR assembly in the endoplasmic reticulum and is required for transport to the cell surface.

It localises to the cell membrane. Its function is as follows. V region of the variable domain of T cell receptor (TR) alpha chain that participates in the antigen recognition. Alpha-beta T cell receptors are antigen specific receptors which are essential to the immune response and are present on the cell surface of T lymphocytes. Recognize peptide-major histocompatibility (MH) (pMH) complexes that are displayed by antigen presenting cells (APC), a prerequisite for efficient T cell adaptive immunity against pathogens. Binding of alpha-beta TR to pMH complex initiates TR-CD3 clustering on the cell surface and intracellular activation of LCK that phosphorylates the ITAM motifs of CD3G, CD3D, CD3E and CD247 enabling the recruitment of ZAP70. In turn ZAP70 phosphorylates LAT, which recruits numerous signaling molecules to form the LAT signalosome. The LAT signalosome propagates signal branching to three major signaling pathways, the calcium, the mitogen-activated protein kinase (MAPK) kinase and the nuclear factor NF-kappa-B (NF-kB) pathways, leading to the mobilization of transcription factors that are critical for gene expression and essential for T cell growth and differentiation. The T cell repertoire is generated in the thymus, by V-(D)-J rearrangement. This repertoire is then shaped by intrathymic selection events to generate a peripheral T cell pool of self-MH restricted, non-autoaggressive T cells. Post-thymic interaction of alpha-beta TR with the pMH complexes shapes TR structural and functional avidity. This chain is T cell receptor alpha variable 39, found in Homo sapiens (Human).